Reading from the N-terminus, the 277-residue chain is Caspase-3 (277 aa).

Met-1 is subject to N-acetylmethionine. Propeptides lie at residues Met-1–Asp-9 and Ser-10–Asp-28. N6-acetyllysine is present on Lys-11. Residue Ser-26 is modified to Phosphoserine. Residues His-121 and Cys-163 contribute to the active site. At Cys-163 the chain carries S-nitrosocysteine; in inhibited form.

The protein belongs to the peptidase C14A family. Heterotetramer that consists of two anti-parallel arranged heterodimers, each one formed by a 17 kDa (p17) and a 12 kDa (p12) subunit. Interacts with BIRC6/bruce. In terms of assembly, (Microbial infection) Subunit p17 interacts with African swine fever virus (ASFV) inhibitor of apoptosis protein. In terms of processing, cleavage by granzyme B, caspase-6, caspase-8 and caspase-10 generates the two active subunits. Additional processing of the propeptides is likely due to the autocatalytic activity of the activated protease. Active heterodimers between the small subunit of caspase-7 protease and the large subunit of caspase-3 also occur and vice versa. S-nitrosylated on its catalytic site cysteine in unstimulated cell lines and denitrosylated upon activation of the Fas apoptotic pathway, associated with an increase in intracellular caspase activity. Fas therefore activates caspase-3 not only by inducing the cleavage of the caspase zymogen to its active subunits, but also by stimulating the denitrosylation of its active site thiol. Post-translationally, ubiquitinated by BIRC6; this activity is inhibited by DIABLO/SMAC.

It is found in the cytoplasm. The enzyme catalyses Strict requirement for an Asp residue at positions P1 and P4. It has a preferred cleavage sequence of Asp-Xaa-Xaa-Asp-|- with a hydrophobic amino-acid residue at P2 and a hydrophilic amino-acid residue at P3, although Val or Ala are also accepted at this position.. Its activity is regulated as follows. Inhibited by BIRC6; following inhibition of BIRC6-caspase binding by DIABLO/SMAC, BIRC6 is subjected to caspase cleavage, leading to an increase in active caspases. Involved in the activation cascade of caspases responsible for apoptosis execution. At the onset of apoptosis, it proteolytically cleaves poly(ADP-ribose) polymerase PARP1 at a '216-Asp-|-Gly-217' bond. Cleaves and activates sterol regulatory element binding proteins (SREBPs) between the basic helix-loop-helix leucine zipper domain and the membrane attachment domain. Cleaves and activates caspase-6, -7 and -9 (CASP6, CASP7 and CASP9, respectively). Cleaves and inactivates interleukin-18 (IL18). Triggers cell adhesion in sympathetic neurons through RET cleavage. Cleaves IL-1 beta between an Asp and an Ala, releasing the mature cytokine which is involved in a variety of inflammatory processes. Cleaves and inhibits serine/threonine-protein kinase AKT1 in response to oxidative stress. Acts as an inhibitor of type I interferon production during virus-induced apoptosis by mediating cleavage of antiviral proteins CGAS, IRF3 and MAVS, thereby preventing cytokine overproduction. Also involved in pyroptosis by mediating cleavage and activation of gasdermin-E (GSDME). Cleaves XRCC4 and phospholipid scramblase proteins XKR4, XKR8 and XKR9, leading to promote phosphatidylserine exposure on apoptotic cell surface. Cleaves BIRC6 following inhibition of BIRC6-caspase binding by DIABLO/SMAC. The polypeptide is Caspase-3 (CASP3) (Sus scrofa (Pig)).